A 340-amino-acid chain; its full sequence is Phosphoribosylformylglycinamidine cyclo-ligase (340 aa).

The protein belongs to the AIR synthase family.

Its subcellular location is the cytoplasm. The enzyme catalyses 2-formamido-N(1)-(5-O-phospho-beta-D-ribosyl)acetamidine + ATP = 5-amino-1-(5-phospho-beta-D-ribosyl)imidazole + ADP + phosphate + H(+). The protein operates within purine metabolism; IMP biosynthesis via de novo pathway; 5-amino-1-(5-phospho-D-ribosyl)imidazole from N(2)-formyl-N(1)-(5-phospho-D-ribosyl)glycinamide: step 2/2. The protein is Phosphoribosylformylglycinamidine cyclo-ligase of Streptococcus gordonii (strain Challis / ATCC 35105 / BCRC 15272 / CH1 / DL1 / V288).